We begin with the raw amino-acid sequence, 87 residues long: Small ribosomal subunit protein uS15c (87 aa).

It belongs to the universal ribosomal protein uS15 family. In terms of assembly, part of the 30S ribosomal subunit.

The protein resides in the plastid. It is found in the chloroplast. The sequence is that of Small ribosomal subunit protein uS15c (rps15) from Oenothera argillicola (Appalachian evening primrose).